Here is a 161-residue protein sequence, read N- to C-terminus: Interleukin-17F (161 aa).

An N-terminal signal peptide occupies residues M1–A28. N-linked (GlcNAc...) asparagine glycosylation occurs at N83. Disulfide bonds link C100-C150 and C105-C152.

Belongs to the IL-17 family. Homodimer; disulfide-linked. Heterodimer with IL17A (IL17A-IL17F). Forms complexes with IL17RA and IL17RC receptors with 2:1 binding stoichiometry: two receptor chains for one interleukin molecule. IL17F homodimer forms predominantly complexes with IL17RC homodimer, whereas IL17A-IL17F favors complexes with IL17RA-IL17RC. IL17RA and IL17RC chains cannot distinguish between IL17A and IL17F molecules, potentially enabling the formation of topologically distinct complexes.

The protein localises to the secreted. Functionally, effector cytokine of innate and adaptive immune system involved in antimicrobial host defense and maintenance of tissue integrity. IL17A-IL17F signals via IL17RA-IL17RC heterodimeric receptor complex, triggering homotypic interaction of IL17RA and IL17RC chains with TRAF3IP2 adapter through SEFIR domains. This leads to downstream TRAF6-mediated activation of NF-kappa-B and MAPkinase pathways ultimately resulting in transcriptional activation of cytokines, chemokines, antimicrobial peptides and matrix metalloproteinases, with potential strong immune inflammation. IL17A-IL17F is primarily involved in host defense against extracellular bacteria and fungi by inducing neutrophilic inflammation. As signature effector cytokine of T-helper 17 cells (Th17), primarily induces neutrophil activation and recruitment at infection and inflammatory sites. Stimulates the production of antimicrobial beta-defensins DEFB1, DEFB103A, and DEFB104A by mucosal epithelial cells, limiting the entry of microbes through the epithelial barriers. IL17F homodimer can signal via IL17RC homodimeric receptor complex, triggering downstream activation of TRAF6 and NF-kappa-B signaling pathway. Via IL17RC induces transcriptional activation of IL33, a potent cytokine that stimulates group 2 innate lymphoid cells and adaptive T-helper 2 cells involved in pulmonary allergic response to fungi. Likely via IL17RC, promotes sympathetic innervation of peripheral organs by coordinating the communication between gamma-delta T cells and parenchymal cells. Stimulates sympathetic innervation of thermogenic adipose tissue by driving TGFB1 expression. Regulates the composition of intestinal microbiota and immune tolerance by inducing antimicrobial proteins that specifically control the growth of commensal Firmicutes and Bacteroidetes. The sequence is that of Interleukin-17F (Il17f) from Rattus norvegicus (Rat).